Consider the following 96-residue polypeptide: Aspartyl/glutamyl-tRNA(Asn/Gln) amidotransferase subunit C (96 aa).

Belongs to the GatC family. As to quaternary structure, heterotrimer of A, B and C subunits.

The catalysed reaction is L-glutamyl-tRNA(Gln) + L-glutamine + ATP + H2O = L-glutaminyl-tRNA(Gln) + L-glutamate + ADP + phosphate + H(+). It catalyses the reaction L-aspartyl-tRNA(Asn) + L-glutamine + ATP + H2O = L-asparaginyl-tRNA(Asn) + L-glutamate + ADP + phosphate + 2 H(+). Functionally, allows the formation of correctly charged Asn-tRNA(Asn) or Gln-tRNA(Gln) through the transamidation of misacylated Asp-tRNA(Asn) or Glu-tRNA(Gln) in organisms which lack either or both of asparaginyl-tRNA or glutaminyl-tRNA synthetases. The reaction takes place in the presence of glutamine and ATP through an activated phospho-Asp-tRNA(Asn) or phospho-Glu-tRNA(Gln). In Bacillus anthracis (strain A0248), this protein is Aspartyl/glutamyl-tRNA(Asn/Gln) amidotransferase subunit C.